A 232-amino-acid polypeptide reads, in one-letter code: Small ribosomal subunit protein uS3 (232 aa).

The region spanning 39 to 107 (IRAILHKELK…DVVINIVEIR (69 aa)) is the KH type-2 domain.

It belongs to the universal ribosomal protein uS3 family. In terms of assembly, part of the 30S ribosomal subunit. Forms a tight complex with proteins S10 and S14.

Binds the lower part of the 30S subunit head. Binds mRNA in the 70S ribosome, positioning it for translation. This Rhodopseudomonas palustris (strain BisA53) protein is Small ribosomal subunit protein uS3.